The following is a 201-amino-acid chain: ATP-dependent Clp protease proteolytic subunit 2 (201 aa).

S101 serves as the catalytic Nucleophile. H126 is an active-site residue.

The protein belongs to the peptidase S14 family. Fourteen ClpP subunits assemble into 2 heptameric rings which stack back to back to give a disk-like structure with a central cavity, resembling the structure of eukaryotic proteasomes.

It is found in the cytoplasm. The enzyme catalyses Hydrolysis of proteins to small peptides in the presence of ATP and magnesium. alpha-casein is the usual test substrate. In the absence of ATP, only oligopeptides shorter than five residues are hydrolyzed (such as succinyl-Leu-Tyr-|-NHMec, and Leu-Tyr-Leu-|-Tyr-Trp, in which cleavage of the -Tyr-|-Leu- and -Tyr-|-Trp bonds also occurs).. Cleaves peptides in various proteins in a process that requires ATP hydrolysis. Has a chymotrypsin-like activity. Plays a major role in the degradation of misfolded proteins. This chain is ATP-dependent Clp protease proteolytic subunit 2, found in Prochlorococcus marinus subsp. pastoris (strain CCMP1986 / NIES-2087 / MED4).